The chain runs to 732 residues: Elongation factor 2 (732 aa).

One can recognise a tr-type G domain in the interval 19–228; sequence ELIRNIGIVA…TKITFKDIVE (210 aa). Residues 28 to 35, 94 to 98, and 148 to 151 contribute to the GTP site; these read AHIDHGKT, DTPGH, and NKID. Residue H598 is modified to Diphthamide.

Belongs to the TRAFAC class translation factor GTPase superfamily. Classic translation factor GTPase family. EF-G/EF-2 subfamily.

The protein resides in the cytoplasm. Functionally, catalyzes the GTP-dependent ribosomal translocation step during translation elongation. During this step, the ribosome changes from the pre-translocational (PRE) to the post-translocational (POST) state as the newly formed A-site-bound peptidyl-tRNA and P-site-bound deacylated tRNA move to the P and E sites, respectively. Catalyzes the coordinated movement of the two tRNA molecules, the mRNA and conformational changes in the ribosome. This is Elongation factor 2 (fusA) from Thermoplasma acidophilum (strain ATCC 25905 / DSM 1728 / JCM 9062 / NBRC 15155 / AMRC-C165).